The chain runs to 250 residues: Functional amyloid sbunit FapE (250 aa).

The first 27 residues, 1–27 (MLREHAMYTHHCFVLACCLGAALPAPA), serve as a signal peptide directing secretion.

This sequence belongs to the FapE family. In terms of assembly, a minor component of purified amyloid fibrils. Fibrils are resistant to boiling in 2% (weight/vol) SDS and require &gt;90% (vol/vol) formic acid to dissolve.

The protein resides in the fimbrium. It localises to the secreted. A minor component of the functional amyloid in this bacterium. Upon overexpression of the endogenous six-gene locus (fapA-fapF), cells form large clumps during liquid growth, make large amounts of biofilm and produce amyloid fibrils. The polypeptide is Functional amyloid sbunit FapE (Pseudomonas aeruginosa (strain ATCC 15692 / DSM 22644 / CIP 104116 / JCM 14847 / LMG 12228 / 1C / PRS 101 / PAO1)).